Here is a 347-residue protein sequence, read N- to C-terminus: N-acetyl-gamma-glutamyl-phosphate reductase (347 aa).

C150 is an active-site residue.

The protein belongs to the NAGSA dehydrogenase family. Type 1 subfamily.

The protein localises to the cytoplasm. It catalyses the reaction N-acetyl-L-glutamate 5-semialdehyde + phosphate + NADP(+) = N-acetyl-L-glutamyl 5-phosphate + NADPH + H(+). It functions in the pathway amino-acid biosynthesis; L-arginine biosynthesis; N(2)-acetyl-L-ornithine from L-glutamate: step 3/4. Catalyzes the NADPH-dependent reduction of N-acetyl-5-glutamyl phosphate to yield N-acetyl-L-glutamate 5-semialdehyde. The sequence is that of N-acetyl-gamma-glutamyl-phosphate reductase from Leifsonia xyli subsp. xyli (strain CTCB07).